The primary structure comprises 762 residues: Serine/threonine-protein kinase PLK4 (762 aa).

The Protein kinase domain maps to 14-268 (YEVQHLLGKG…LEQVLRHPFM (255 aa)). Residues 20–28 (LGKGGFACV) and K43 contribute to the ATP site. D139 serves as the catalytic Proton acceptor. Positions 383 to 498 (AECISMPPLN…ARFVSLVKSK (116 aa)) constitute a Cryptic POLO box 1 (CPB1) domain. The Cryptic POLO box 2 (CPB2) domain occupies 499–602 (TPKVTYFSGL…GRRPTPEVMP (104 aa)). The POLO box domain occupies 657-736 (PIKRLNVPGV…LPQVQMKLKS (80 aa)).

It belongs to the protein kinase superfamily. Ser/Thr protein kinase family. CDC5/Polo subfamily. As to quaternary structure, homodimer. In terms of processing, ubiquitinated by the SCF(Slimb) ubiquitin ligase complex; leading to its degradation by the proteasome during interphase and regulating centriole number and ensuring the block to centriole reduplication.

Its subcellular location is the cytoplasm. It is found in the cytoskeleton. It localises to the microtubule organizing center. The protein resides in the centrosome. The protein localises to the centriole. It carries out the reaction L-seryl-[protein] + ATP = O-phospho-L-seryl-[protein] + ADP + H(+). It catalyses the reaction L-threonyl-[protein] + ATP = O-phospho-L-threonyl-[protein] + ADP + H(+). Functionally, serine/threonine-protein kinase that plays a central role in centriole duplication. Able to trigger procentriole formation on the surface of the mother centriole cylinder, using mother centriole as a platform, leading to the recruitment of centriole biogenesis proteins such as sas-6. When overexpressed, it is able to induce centrosome amplification through the simultaneous generation of multiple procentrioles adjoining each parental centriole during S phase. Centrosome amplification following overexpression can initiate tumorigenesis, highlighting the importance of centrosome regulation in cancers. In Drosophila grimshawi (Hawaiian fruit fly), this protein is Serine/threonine-protein kinase PLK4 (SAK).